We begin with the raw amino-acid sequence, 105 residues long: uncharacterized protein (105 aa).

A helical membrane pass occupies residues 13–35 (LLFAFVVVIVVLTLSYVYAQNII).

It is found in the membrane. This is an uncharacterized protein from Archaeoglobus fulgidus (strain ATCC 49558 / DSM 4304 / JCM 9628 / NBRC 100126 / VC-16).